The following is a 463-amino-acid chain: Vacuolar cation/proton exchanger 1 (463 aa).

Residue Ala2 is modified to N-acetylalanine. Topologically, residues 2-68 are cytoplasmic; sequence AGIVTEPWSV…LKDFLSNLQE (67 aa). The segment at 25–33 is required for autoinhibitory regulation; that stretch reads SRELRLGRT. Residues 56–62 form a required for interaction with autoinhibitory region region; the sequence is YKGLKDF. The helical transmembrane segment at 69 to 89 threads the bilayer; it reads VILGTKLAILFPAIPAAIICT. Residues 87-95 are required for Ca(2+)/H(+) exchange activity; it reads ICTYCGVSQ. At 90 to 96 the chain is on the extracellular side; sequence YCGVSQP. Residues 97 to 116 form a helical membrane-spanning segment; sequence WIFGLSLLGLTPLAERVSFL. Over 117-127 the chain is Cytoplasmic; it reads TEQLAFYTGPT. A helical membrane pass occupies residues 128–148; sequence LGGLLNATCGNATELIIAILA. The cation selection stretch occupies residues 137-172; that stretch reads GNATELIIAILALTNNKVAVVKYSLLGSILSNLLLV. Topologically, residues 149 to 161 are extracellular; that stretch reads LTNNKVAVVKYSL. Residues 162–182 form a helical membrane-spanning segment; sequence LGSILSNLLLVLGTSLFCGGI. The Cytoplasmic segment spans residues 183–197; sequence ANIRREQRFDRKQAD. The chain crosses the membrane as a helical span at residues 198–218; that stretch reads VNFFLLLLGFLCHLLPLLVGY. At 219 to 238 the chain is on the extracellular side; it reads LKNGEASAAVLSDMQLSISR. Residues 239-259 form a helical membrane-spanning segment; that stretch reads GFSIVMLISYIAYLVFQLWTH. At 260-281 the chain is on the cytoplasmic side; sequence RQLFDAQEQEDEYDDDVEQETA. The helical transmembrane segment at 282 to 302 threads the bilayer; sequence VISFWSGFAWLVGMTLVIALL. The Extracellular portion of the chain corresponds to 303–325; the sequence is SEYVVATIEEASDKWNLSVSFIS. N-linked (GlcNAc...) asparagine glycosylation occurs at Asn318. Residues 326 to 346 form a helical membrane-spanning segment; it reads IILLPIVGNAAEHAGAVIFAF. Positions 333-368 are cation selection; it reads GNAAEHAGAVIFAFKNKLDISLGVALGSATQIGLFV. Residues 347 to 360 lie on the Cytoplasmic side of the membrane; that stretch reads KNKLDISLGVALGS. Residues 361–381 form a helical membrane-spanning segment; sequence ATQIGLFVVPLTIIVAWILGI. The Extracellular portion of the chain corresponds to 382–384; sequence NMD. A helical membrane pass occupies residues 385 to 405; it reads LNFGPLETGCLAVSIIITAFT. The Cytoplasmic segment spans residues 406–411; sequence LQDGSS. A helical transmembrane segment spans residues 412–432; that stretch reads HYMKGLVLLLCYFIIAICFFV. Over 433 to 463 the chain is Extracellular; sequence DKLPQKQNAIHLGHQAMNNVVTATGGGVFSS.

Belongs to the Ca(2+):cation antiporter (CaCA) (TC 2.A.19) family. Cation/proton exchanger (CAX) subfamily. In terms of assembly, interacts with GRXS14 and CXIP4. In terms of tissue distribution, expressed at low levels in leaves, stems and flowers.

Its subcellular location is the vacuole membrane. Activated by monothiol glutaredoxin GRXS14 and CXIP4. Inhibited by excess of Ca(2+) and Cd(2+), Na(+) and K(+), but not Mn(2+). Its function is as follows. Vacuolar cation/proton exchanger (CAX). Translocates Ca(2+) and other metal ions into vacuoles using the proton gradient formed by H(+)-ATPase and H(+)-pyrophosphatase. Involved in ion homeostasis in association with CAX3. May play a role in cold-acclimation response. In Arabidopsis thaliana (Mouse-ear cress), this protein is Vacuolar cation/proton exchanger 1 (CAX1).